Reading from the N-terminus, the 362-residue chain is MAQLYSSVKPTPMLKDELDIVIPTIRNLDFLEMWRPFFEQYHLIIVQDGDPSKVINIPVGFDYELYNRNDINRILGPKASCISFKDSACRCFGYMVSKKKYIYTIDDDCFVAKDPTGKEINALEQHIKNLLSPSTPHFFNTLYDPYRDGADFVRGYPFSMREGAITAVSHGLWLNIPDYDAPTQLVKPLEKNSRYVDAVMTIPKGTLFPMCGMNLAFDRELIGPAMYFGLMGDGQPIGRYDDMWAGWCVKVICDHMGWGVKTGLPYIWHSKASNPFVNLKKEYNGIFWQEEAIPFFQSVTLPKECTSVQQCYLELAKLVREKLGKVDPYFITLATGMVTWIEAWEELNSAEGTEAEAPKGKN.

The short motif at 106-108 is the DXD motif element; sequence DDD. N-linked (Glc...) arginine glycosylation is present at arginine 154.

Belongs to the RGP family. As to quaternary structure, heterodimer with RGP1. Mn(2+) serves as cofactor. The cofactor is Mg(2+). In terms of processing, reversibly glycosylated in vitro by UDP-glucose, UDP-xylose and UDP-galactose, but not UDP-mannose. Specifically expressed in developing seeds.

The protein resides in the cytoplasm. The protein localises to the cytosol. Its subcellular location is the golgi apparatus. The enzyme catalyses UDP-beta-L-arabinofuranose = UDP-beta-L-arabinopyranose. Functionally, UDP-L-arabinose mutase involved in the biosynthesis of cell wall non-cellulosic polysaccharides. Catalyzes the interconvertion of UDP-L-arabinopyranose (UDP-Arap) and UDP-L-arabinofuranose (UDP-Araf). Preferentially catalyzes the formation of UDP-Arap from UDP-Araf. At thermodynamic equilibrium in vitro the ratio of the pyranose form over the furanose form is 95:5. Is not active on other UDP-sugars (UDP-Gal, UDP-Xyl, UDP-Glc, GDP-Man and GDP-Fuc). Is probably active as heteromer in vivo. The polypeptide is UDP-arabinopyranose mutase 3 (Arabidopsis thaliana (Mouse-ear cress)).